The sequence spans 393 residues: Xyloside xylosyltransferase 1 (393 aa).

Residues 1–23 are Cytoplasmic-facing; that stretch reads MGLLRGGLPCARAMARLGAVRSH. The chain crosses the membrane as a helical; Signal-anchor for type II membrane protein span at residues 24 to 44; that stretch reads YCALLLAAALAVCAFYYLGSG. Residues 45-393 lie on the Lumenal side of the membrane; the sequence is RETFSSATKR…GNCNTPIPED (349 aa). UDP-alpha-D-xylose is bound at residue 104–106; that stretch reads MFT. Asp226 serves as a coordination point for Mn(2+). Leu227 is a binding site for UDP-alpha-D-xylose. Residue Asp228 coordinates Mn(2+). The tract at residues 263 to 266 is interaction with target proteins; it reads HTFW. 3 residues coordinate UDP-alpha-D-xylose: Ser290, Leu328, and Gln331. The a glycoprotein site is built by Gln331 and Trp360. 2 disulfide bridges follow: Cys350–Cys375 and Cys357–Cys386. His383 contacts Mn(2+). Position 385 (Asn385) interacts with a glycoprotein.

This sequence belongs to the glycosyltransferase 8 family. Homodimer. Dimer formation may be essential for the retention in endoplasmic reticulum. Mg(2+) is required as a cofactor. Mn(2+) serves as cofactor.

The protein resides in the endoplasmic reticulum membrane. It catalyses the reaction 3-O-[alpha-D-xylosyl-(1-&gt;3)-beta-D-glucosyl]-L-seryl-[EGF-like domain protein] + UDP-alpha-D-xylose = 3-O-[alpha-D-xylosyl-(1-&gt;3)-alpha-D-xylosyl-(1-&gt;3)-beta-D-glucosyl]-L-seryl-[EGF-like domain protein] + UDP + H(+). In terms of biological role, alpha-1,3-xylosyltransferase, which elongates the O-linked xylose-glucose disaccharide attached to EGF-like repeats in the extracellular domain of target proteins by catalyzing the addition of the second xylose. Known targets include Notch proteins and coagulation factors, such as F9. This is Xyloside xylosyltransferase 1 (XXYLT1) from Homo sapiens (Human).